The sequence spans 616 residues: Chaperone protein HscA homolog (616 aa).

It belongs to the heat shock protein 70 family.

Its function is as follows. Probable chaperone. Has a low intrinsic ATPase activity which is markedly stimulated by HscB. This chain is Chaperone protein HscA homolog, found in Vibrio cholerae serotype O1 (strain ATCC 39315 / El Tor Inaba N16961).